The primary structure comprises 359 residues: Histidinol-phosphate aminotransferase (359 aa).

K217 carries the N6-(pyridoxal phosphate)lysine modification.

It belongs to the class-II pyridoxal-phosphate-dependent aminotransferase family. Histidinol-phosphate aminotransferase subfamily. Homodimer. Pyridoxal 5'-phosphate serves as cofactor.

It catalyses the reaction L-histidinol phosphate + 2-oxoglutarate = 3-(imidazol-4-yl)-2-oxopropyl phosphate + L-glutamate. The protein operates within amino-acid biosynthesis; L-histidine biosynthesis; L-histidine from 5-phospho-alpha-D-ribose 1-diphosphate: step 7/9. The protein is Histidinol-phosphate aminotransferase of Salmonella enteritidis PT4 (strain P125109).